A 631-amino-acid polypeptide reads, in one-letter code: Glutamine--fructose-6-phosphate aminotransferase [isomerizing] (631 aa).

The active-site Nucleophile; for GATase activity is the cysteine 2. A Glutamine amidotransferase type-2 domain is found at 2–225 (CGIVGYIGTQ…NGEIARLTPL (224 aa)). SIS domains are found at residues 298–446 (LDPQ…QRHS) and 480–621 (LAHE…VDQP). Lysine 626 functions as the For Fru-6P isomerization activity in the catalytic mechanism.

Homodimer.

It is found in the cytoplasm. The enzyme catalyses D-fructose 6-phosphate + L-glutamine = D-glucosamine 6-phosphate + L-glutamate. Functionally, catalyzes the first step in hexosamine metabolism, converting fructose-6P into glucosamine-6P using glutamine as a nitrogen source. This Synechocystis sp. (strain ATCC 27184 / PCC 6803 / Kazusa) protein is Glutamine--fructose-6-phosphate aminotransferase [isomerizing].